A 229-amino-acid chain; its full sequence is C-&gt;U-editing enzyme APOBEC-1 (229 aa).

One can recognise a CMP/dCMP-type deaminase domain in the interval 10–134 (VDPTLRRRIE…QRNRQGLRDL (125 aa)). Position 61 (His-61) interacts with Zn(2+). Catalysis depends on Glu-63, which acts as the Proton donor. The Zn(2+) site is built by Cys-93 and Cys-96.

It belongs to the cytidine and deoxycytidylate deaminase family. Homodimer. Interacts with A1CF; form an mRNA editing complex. Interacts with RBM47; form an mRNA editing complex. Found in a complex with CELF2/CUGBP2 and A1CF. Interacts with HNRPAB. Interacts with SYNCRIP. Requires Zn(2+) as cofactor.

The protein localises to the cytoplasm. The protein resides in the nucleus. The catalysed reaction is a cytidine in mRNA + H2O + H(+) = a uridine in mRNA + NH4(+). The enzyme catalyses cytidine(6666) in apoB mRNA + H2O + H(+) = uridine(6666) in apoB mRNA + NH4(+). Cytidine deaminase catalyzing the cytidine to uridine postranscriptional editing of a variety of mRNAs. Form complexes with cofactors that confer differential editing activity and selectivity. Responsible for the postranscriptional editing of a CAA codon for Gln to a UAA codon for stop in the apolipoprotein B mRNA. Also involved in CGA (Arg) to UGA (Stop) editing in the NF1 mRNA. May also play a role in the epigenetic regulation of gene expression by participating in DNA demethylation. The sequence is that of C-&gt;U-editing enzyme APOBEC-1 from Mesocricetus auratus (Golden hamster).